The following is a 141-amino-acid chain: Putative phosphatidylglycerol/phosphatidylinositol transfer protein DDB_G0278295 (141 aa).

The signal sequence occupies residues 1–19 (MRLLLALFFVLALVSPSFT). Asn-82 and Asn-104 each carry an N-linked (GlcNAc...) asparagine glycan.

Belongs to the NPC2 family. Monomer.

Catalyzes the intermembrane transfer of phosphatidylglycerol and phosphatidylinositol. The polypeptide is Putative phosphatidylglycerol/phosphatidylinositol transfer protein DDB_G0278295 (Dictyostelium discoideum (Social amoeba)).